The sequence spans 1220 residues: Bud site selection protein RAX2 (1220 aa).

An N-terminal signal peptide occupies residues 1-20 (MFVHRLWTLAFPFLVEISKA). The Extracellular segment spans residues 21 to 1162 (SQLENIKSLL…KKKKIGRGFV (1142 aa)). N-linked (GlcNAc...) asparagine glycans are attached at residues asparagine 41, asparagine 45, asparagine 69, asparagine 88, asparagine 124, asparagine 134, asparagine 145, asparagine 158, asparagine 166, asparagine 171, asparagine 187, asparagine 200, asparagine 235, asparagine 238, asparagine 244, asparagine 333, asparagine 365, asparagine 379, asparagine 432, asparagine 445, asparagine 516, asparagine 524, asparagine 613, asparagine 620, asparagine 626, asparagine 640, asparagine 677, asparagine 705, asparagine 713, asparagine 721, asparagine 731, asparagine 749, asparagine 758, asparagine 792, asparagine 821, asparagine 848, asparagine 861, asparagine 884, asparagine 890, asparagine 908, asparagine 923, asparagine 942, asparagine 956, asparagine 980, asparagine 983, asparagine 1011, asparagine 1024, asparagine 1031, asparagine 1060, asparagine 1071, asparagine 1098, and asparagine 1126. A disordered region spans residues 1129-1151 (VTSPQSTSSQPPSSSASSESKSK). The segment covering 1131 to 1147 (SPQSTSSQPPSSSASSE) has biased composition (low complexity). Residues 1163–1183 (VLIGLALALGTVSVLGIAGVI) form a helical membrane-spanning segment. Over 1184-1220 (LAYVFKDPEGDYKPIKPRIDENEMLDTVPPEKLMKFV) the chain is Cytoplasmic.

This sequence belongs to the RAX2 family. Forms an heterodimeric complex with RAX1. Interacts with BUD8 at the proximal or distal pole in unbudded cells. Interacts with BUD9 at the birth scar in budded mother cells. In terms of processing, glycosylated.

It is found in the cell membrane. It localises to the bud neck. Its subcellular location is the bud tip. In terms of biological role, required for the maintenance of the bipolar budding pattern. Involved in selecting bud sites at both the distal and proximal poles of daughter cells as well as near previously used division sites on mother cells. The RAX1-RAX2 complex performs the asymmetric localization of the two cortical landmarks, BUD8 and BUD9, at the distal and proximal poles, respectively. This chain is Bud site selection protein RAX2 (RAX2), found in Saccharomyces cerevisiae (strain ATCC 204508 / S288c) (Baker's yeast).